The sequence spans 342 residues: Phosphoribosylformylglycinamidine cyclo-ligase (342 aa).

The protein belongs to the AIR synthase family.

Its subcellular location is the cytoplasm. The enzyme catalyses 2-formamido-N(1)-(5-O-phospho-beta-D-ribosyl)acetamidine + ATP = 5-amino-1-(5-phospho-beta-D-ribosyl)imidazole + ADP + phosphate + H(+). It functions in the pathway purine metabolism; IMP biosynthesis via de novo pathway; 5-amino-1-(5-phospho-D-ribosyl)imidazole from N(2)-formyl-N(1)-(5-phospho-D-ribosyl)glycinamide: step 2/2. The protein is Phosphoribosylformylglycinamidine cyclo-ligase of Latilactobacillus sakei subsp. sakei (strain 23K) (Lactobacillus sakei subsp. sakei).